The sequence spans 317 residues: Acetyl-coenzyme A carboxylase carboxyl transferase subunit alpha (317 aa).

The CoA carboxyltransferase C-terminal domain occupies 43–293; it reads RVRESMADIY…GDVISNALGE (251 aa).

This sequence belongs to the AccA family. As to quaternary structure, acetyl-CoA carboxylase is a heterohexamer composed of biotin carboxyl carrier protein (AccB), biotin carboxylase (AccC) and two subunits each of ACCase subunit alpha (AccA) and ACCase subunit beta (AccD).

It is found in the cytoplasm. It catalyses the reaction N(6)-carboxybiotinyl-L-lysyl-[protein] + acetyl-CoA = N(6)-biotinyl-L-lysyl-[protein] + malonyl-CoA. It functions in the pathway lipid metabolism; malonyl-CoA biosynthesis; malonyl-CoA from acetyl-CoA: step 1/1. Component of the acetyl coenzyme A carboxylase (ACC) complex. First, biotin carboxylase catalyzes the carboxylation of biotin on its carrier protein (BCCP) and then the CO(2) group is transferred by the carboxyltransferase to acetyl-CoA to form malonyl-CoA. This is Acetyl-coenzyme A carboxylase carboxyl transferase subunit alpha from Rhizobium rhizogenes (strain K84 / ATCC BAA-868) (Agrobacterium radiobacter).